The primary structure comprises 201 residues: MNLVPMVVDQTPRGERAYDIFSRLLKERVVFLTGPIEDGMASLIVAQLLFLEAENPDKDIFMYINSPGGVVTAGLSIYDTMQYIKPSVSTVCVGQAASAASLILASGAEGKRFALPHSRVMVHQPSGGVRGQATDMEIHVKEILQLKRMINEIYQKHTGETIKKIETLLERDTFLSPEEAKKVGIIDDIITQRKENSGKQE.

The active-site Nucleophile is serine 98. Histidine 123 is a catalytic residue.

The protein belongs to the peptidase S14 family. As to quaternary structure, fourteen ClpP subunits assemble into 2 heptameric rings which stack back to back to give a disk-like structure with a central cavity, resembling the structure of eukaryotic proteasomes.

It is found in the cytoplasm. It carries out the reaction Hydrolysis of proteins to small peptides in the presence of ATP and magnesium. alpha-casein is the usual test substrate. In the absence of ATP, only oligopeptides shorter than five residues are hydrolyzed (such as succinyl-Leu-Tyr-|-NHMec, and Leu-Tyr-Leu-|-Tyr-Trp, in which cleavage of the -Tyr-|-Leu- and -Tyr-|-Trp bonds also occurs).. Its function is as follows. Cleaves peptides in various proteins in a process that requires ATP hydrolysis. Has a chymotrypsin-like activity. Plays a major role in the degradation of misfolded proteins. The sequence is that of ATP-dependent Clp protease proteolytic subunit from Neorickettsia sennetsu (strain ATCC VR-367 / Miyayama) (Ehrlichia sennetsu).